The primary structure comprises 230 residues: Phosphoribosylformylglycinamidine synthase subunit PurQ (230 aa).

The Glutamine amidotransferase type-1 domain maps to 2 to 226 (RVAVIVFPGS…LKTWREQNSV (225 aa)). Residue Cys86 is the Nucleophile of the active site. Active-site residues include His195 and Glu197.

Part of the FGAM synthase complex composed of 1 PurL, 1 PurQ and 2 PurS subunits.

Its subcellular location is the cytoplasm. It carries out the reaction N(2)-formyl-N(1)-(5-phospho-beta-D-ribosyl)glycinamide + L-glutamine + ATP + H2O = 2-formamido-N(1)-(5-O-phospho-beta-D-ribosyl)acetamidine + L-glutamate + ADP + phosphate + H(+). The enzyme catalyses L-glutamine + H2O = L-glutamate + NH4(+). It participates in purine metabolism; IMP biosynthesis via de novo pathway; 5-amino-1-(5-phospho-D-ribosyl)imidazole from N(2)-formyl-N(1)-(5-phospho-D-ribosyl)glycinamide: step 1/2. Part of the phosphoribosylformylglycinamidine synthase complex involved in the purines biosynthetic pathway. Catalyzes the ATP-dependent conversion of formylglycinamide ribonucleotide (FGAR) and glutamine to yield formylglycinamidine ribonucleotide (FGAM) and glutamate. The FGAM synthase complex is composed of three subunits. PurQ produces an ammonia molecule by converting glutamine to glutamate. PurL transfers the ammonia molecule to FGAR to form FGAM in an ATP-dependent manner. PurS interacts with PurQ and PurL and is thought to assist in the transfer of the ammonia molecule from PurQ to PurL. This is Phosphoribosylformylglycinamidine synthase subunit PurQ from Brevibacillus brevis (strain 47 / JCM 6285 / NBRC 100599).